Here is a 132-residue protein sequence, read N- to C-terminus: Small ribosomal subunit protein uS8 (132 aa).

This sequence belongs to the universal ribosomal protein uS8 family. As to quaternary structure, part of the 30S ribosomal subunit. Contacts proteins S5 and S12.

Its function is as follows. One of the primary rRNA binding proteins, it binds directly to 16S rRNA central domain where it helps coordinate assembly of the platform of the 30S subunit. The chain is Small ribosomal subunit protein uS8 from Corynebacterium kroppenstedtii (strain DSM 44385 / JCM 11950 / CIP 105744 / CCUG 35717).